Reading from the N-terminus, the 429-residue chain is 4-hydroxyphenylacetate degradation bifunctional isomerase/decarboxylase (429 aa).

2 Approximate repeats span residues 1-215 (MKGT…NQTF) and 216-429 (TWPL…ESAN). A divalent metal cation contacts are provided by E276, E278, and D307.

Belongs to the FAH family. As to quaternary structure, monomer. Requires Mg(2+) as cofactor.

It catalyses the reaction (2E,4Z)-5-hydroxypenta-2,4-diene-1,2,5-tricarboxylate = (3E,5R)-5-carboxy-2-oxohept-3-enedioate. The catalysed reaction is (3E,5R)-5-carboxy-2-oxohept-3-enedioate + H(+) = (4Z)-2-oxohept-4-enedioate + CO2. The protein operates within aromatic compound metabolism; 4-hydroxyphenylacetate degradation; pyruvate and succinate semialdehyde from 4-hydroxyphenylacetate: step 4/7. Its pathway is aromatic compound metabolism; 4-hydroxyphenylacetate degradation; pyruvate and succinate semialdehyde from 4-hydroxyphenylacetate: step 5/7. Decarboxylates OPET (5-oxo-pent-3-ene-1,2,5-tricarboxylic acid) into HHDD (2-hydroxy-hept-2,4-diene-1,7-dioate) and isomerizes it to OHED (2-oxo-hept-3-ene-1,7-dioate). The chain is 4-hydroxyphenylacetate degradation bifunctional isomerase/decarboxylase (hpaG) from Salmonella dublin.